The sequence spans 158 residues: Cyclic pyranopterin monophosphate synthase (158 aa).

Substrate is bound by residues 75 to 77 (LCH) and 113 to 114 (ME). The active site involves Asp128.

This sequence belongs to the MoaC family. In terms of assembly, homohexamer; trimer of dimers.

The catalysed reaction is (8S)-3',8-cyclo-7,8-dihydroguanosine 5'-triphosphate = cyclic pyranopterin phosphate + diphosphate. The protein operates within cofactor biosynthesis; molybdopterin biosynthesis. Its function is as follows. Catalyzes the conversion of (8S)-3',8-cyclo-7,8-dihydroguanosine 5'-triphosphate to cyclic pyranopterin monophosphate (cPMP). The sequence is that of Cyclic pyranopterin monophosphate synthase from Ralstonia nicotianae (strain ATCC BAA-1114 / GMI1000) (Ralstonia solanacearum).